A 395-amino-acid chain; its full sequence is Flagellin B (395 aa).

Belongs to the bacterial flagellin family.

It is found in the secreted. The protein localises to the bacterial flagellum. Flagellin is the subunit protein which polymerizes to form the filaments of bacterial flagella. The chain is Flagellin B (flaB) from Rhizobium meliloti (Ensifer meliloti).